Reading from the N-terminus, the 1343-residue chain is MGYSYSEKKRIRKDFGKRPQVLNVPYLLTIQLDSFDKFIQKDPEGQQGLEAAFRSVFPIVSNNGYTELQYVDYRLEEPEFDVRECQIRGSTYAAGLRVKLRLVSYDKESSSRAVKDIKENEVYMGEIPLMTDNGTFVINGTERVIVSQLHRSPGVFFDSDKGKTHSSGKVLYNARIIPYRGSWLDFEFDPKDNLFARIDRRRKLPATIILRALGYTTEEILNLFFDKITFEISGDKLLMTLVPERLRGETASFDIEANGKVYVERGRRITARHIKALEKDNISQVVVPSEYILGKVASKDYVDLESGEIICPANGEISLETLAKLAQAGYTTIETLFTNDLDYGPYISETLRVDPTYDKTSALYEIYRMMRPGEPPTPESSEALFNNLFFSAERYDLSTVGRMKFNRSLAFPEGEGAGILSNEDIIAVMRKLIDIRNGRGEVDDIDHLGNRRIRSVGEMAENQFRIGLVRVERAVKERLSLGDLDAITPQDLINPKPISAAVKEFFGSSQLSQFMDQNNPLSEVTHKRRISALGPGGLTRERAGFEVRDVHNTHYGRLCPIETPEGPNIGLINSLSAFARTNDYGFLETPYRKVVDGQVTEEIEYLSAIDEANYIIAQANSNLDENNRFTDAFVTARGERGESGLYKPEDIHYMDVSTQQVVSVAAALIPFLEHDDANRALMGANMQRQAVPTLRADKPLVGTGMEKPIALDSGVAVVAKRGGTVQYVDASRIVIKVNEDETIAGEAGIDIYNLIKYTRSNQNTCINQIPCVNLGDPINRGEVLADGPSTDLGELALGQNIRVAFMPWNGYNFEDSMLVSERVVQQDRFTTIHIQELSCVARDTKLGSEEITADIPNVGESALSKLDESGIVYVGAEVKGGDILVGKVTPKGETQLTPEEKLLRAIFGEKASDVKDSSLRVPNGTSGTVIDVQVFTRDGVEKDKRALEIEEMQLREAKKDLTEELEILEAGLFARVRNLLISSGADAAQLDKLDRTKWLEQTIADEEKQNQLEQLAEQYEELRKEFEHKLEVKRKKIIKGDDLAPGVLKVVKVYLAVKRQIQPGDKMAGRHGNKGVISKINPVEDMPYDENGQPVEIVLNPLGVPSRMNIGQILETHLGLAAKGIGDQINTMLKQKQEVEKLRSYIQKAYDLLGNGSQKVDLSTFTDEEVLRLAGNLRKGLPVATPVFDGADEAEIKELLKLGGLPTSGQITLYDGRTGEKFERPVTVGYMYMLKLNHLVDDKMHARSTGSYSLVTQQPLGGKAQFGGQRFGEMEVWALEAYGAAYTLQEMLTVKSDDVNGRTKMYKNIVSGNQHMDPGTPESFNVIMKEIRSLGLNIELDEE.

The protein belongs to the RNA polymerase beta chain family. As to quaternary structure, the RNAP catalytic core consists of 2 alpha, 1 beta, 1 beta' and 1 omega subunit. When a sigma factor is associated with the core the holoenzyme is formed, which can initiate transcription.

It catalyses the reaction RNA(n) + a ribonucleoside 5'-triphosphate = RNA(n+1) + diphosphate. DNA-dependent RNA polymerase catalyzes the transcription of DNA into RNA using the four ribonucleoside triphosphates as substrates. In Haemophilus influenzae (strain PittEE), this protein is DNA-directed RNA polymerase subunit beta.